Here is a 450-residue protein sequence, read N- to C-terminus: MSTALVILAAGKGTRMKSDLPKVLHPIAHAPMLVHAMRAGAVLEPARTVIVAGHGAEAVRAAALDEDEGATVVLQEEQLGTAHAVDQARAALEGFEGDVVVLYGDTPFLQPDTLERMLAARKTHDLVILGFEAADPARYGRLVMQGDSLERIVEFKEATEQERAIRFCNSGLLACNAETLFALIAAVGNNNASGEYYLTDVVEIARKQGLAVTAVACDEAQTLGVNSRADLAAADAIFQTRARAELLDLGVTLMAPETVYLAADTVIGRDTVIEPNVVFGPGVTVESGATIRAFSHLEGCHVSRGAVVGPYARLRPGAELAENARIGNFVEIKNAEIGEGAKVNHLTYIGDASIGAGSNIGAGTITCNYDGVMKHRTTIGANVFIGSNTMLVAPVTLGDGAMTATGTVVTRDVEPDALAKARVKQENKPDRARKLFEMLRAKKASKQKET.

The pyrophosphorylase stretch occupies residues 1–228 (MSTALVILAA…EAQTLGVNSR (228 aa)). UDP-N-acetyl-alpha-D-glucosamine-binding positions include 8–11 (LAAG), Lys-22, Gln-75, 80–81 (GT), 103–105 (YGD), Gly-140, Glu-154, Asn-169, and Asn-226. Asp-105 provides a ligand contact to Mg(2+). Mg(2+) is bound at residue Asn-226. The tract at residues 229 to 249 (ADLAAADAIFQTRARAELLDL) is linker. Residues 250 to 450 (GVTLMAPETV…AKKASKQKET (201 aa)) are N-acetyltransferase. Arg-315 and Lys-333 together coordinate UDP-N-acetyl-alpha-D-glucosamine. His-345 functions as the Proton acceptor in the catalytic mechanism. The UDP-N-acetyl-alpha-D-glucosamine site is built by Tyr-348 and Asn-359. Residues Ala-362, 368-369 (NY), Ser-387, Thr-405, and Arg-422 contribute to the acetyl-CoA site.

This sequence in the N-terminal section; belongs to the N-acetylglucosamine-1-phosphate uridyltransferase family. The protein in the C-terminal section; belongs to the transferase hexapeptide repeat family. Homotrimer. Requires Mg(2+) as cofactor.

It is found in the cytoplasm. It carries out the reaction alpha-D-glucosamine 1-phosphate + acetyl-CoA = N-acetyl-alpha-D-glucosamine 1-phosphate + CoA + H(+). The enzyme catalyses N-acetyl-alpha-D-glucosamine 1-phosphate + UTP + H(+) = UDP-N-acetyl-alpha-D-glucosamine + diphosphate. The protein operates within nucleotide-sugar biosynthesis; UDP-N-acetyl-alpha-D-glucosamine biosynthesis; N-acetyl-alpha-D-glucosamine 1-phosphate from alpha-D-glucosamine 6-phosphate (route II): step 2/2. It functions in the pathway nucleotide-sugar biosynthesis; UDP-N-acetyl-alpha-D-glucosamine biosynthesis; UDP-N-acetyl-alpha-D-glucosamine from N-acetyl-alpha-D-glucosamine 1-phosphate: step 1/1. Its pathway is bacterial outer membrane biogenesis; LPS lipid A biosynthesis. Its function is as follows. Catalyzes the last two sequential reactions in the de novo biosynthetic pathway for UDP-N-acetylglucosamine (UDP-GlcNAc). The C-terminal domain catalyzes the transfer of acetyl group from acetyl coenzyme A to glucosamine-1-phosphate (GlcN-1-P) to produce N-acetylglucosamine-1-phosphate (GlcNAc-1-P), which is converted into UDP-GlcNAc by the transfer of uridine 5-monophosphate (from uridine 5-triphosphate), a reaction catalyzed by the N-terminal domain. The protein is Bifunctional protein GlmU of Ruegeria pomeroyi (strain ATCC 700808 / DSM 15171 / DSS-3) (Silicibacter pomeroyi).